Consider the following 254-residue polypeptide: Protein odd-skipped-related 2 (254 aa).

3 consecutive C2H2-type zinc fingers follow at residues 124–146 (FICK…ERTH), 152–174 (YSCD…KYIH), and 180–202 (FKCE…RATH).

Belongs to the Odd C2H2-type zinc-finger protein family.

It is found in the nucleus. Its function is as follows. May function as transcription regulator. Required for morphogenesis and function of the digestive tract. The polypeptide is Protein odd-skipped-related 2 (Caenorhabditis elegans).